The chain runs to 256 residues: MFKSVAKLGKSPIFYLNSQRLIHIKTLTTPNENALKFLSTDGEMLQTRGSKSIVIKNTDENLINHSKLAQQIFLQCPGVESLMIGDDFLTINKDRMVHWNSIKPEIIDLLTKQLAYGEDVISKEFHAVQEEEGEGGYKINMPKFELTEEDEEVSELIEELIDTRIRPAILEDGGDIDYRGWDPKTGTVYLRLQGACTSCSSSEVTLKYGIESMLKHYVDEVKEVIQIMDPEQEIALKEFDKLEKKLESSKNTSHEK.

Residues 196–199 (CTSC) carry the CxxC motif motif.

Belongs to the NifU family. Homodimer; in absence of BOL3, probably bridged by an iron-sulfure cluster. Interacts with BOL3. Interacts with apo-target proteins, such as ACO1, LYS4, ACO2 and SDH2.

The protein resides in the mitochondrion matrix. Its function is as follows. Involved in iron homeostasis within the mitochondrion where it is involved in the assembly of iron-sulfur proteins. Together with BOL3, required during the last step of iron-sulfur protein assembly when the iron-sulfur cluster is inserted into the target protein. Required for protecting iron sulfur clusters from oxidative damage. This Saccharomyces cerevisiae (strain ATCC 204508 / S288c) (Baker's yeast) protein is NifU-like protein, mitochondrial (NFU1).